The chain runs to 314 residues: Glycerol-1-phosphate dehydrogenase [NAD(P)+] (314 aa).

Residues 52–56 and 74–77 contribute to the NAD(+) site; these read GKPLD and TSAS. Substrate is bound at residue Asp-79. Ser-83 lines the NAD(+) pocket. Asp-131 provides a ligand contact to substrate. 2 residues coordinate Zn(2+): Asp-131 and His-211. His-215 contributes to the substrate binding site. His-231 is a binding site for Zn(2+).

It belongs to the glycerol-1-phosphate dehydrogenase family. Zn(2+) is required as a cofactor.

It localises to the cytoplasm. It carries out the reaction sn-glycerol 1-phosphate + NAD(+) = dihydroxyacetone phosphate + NADH + H(+). The catalysed reaction is sn-glycerol 1-phosphate + NADP(+) = dihydroxyacetone phosphate + NADPH + H(+). It functions in the pathway membrane lipid metabolism; glycerophospholipid metabolism. In terms of biological role, catalyzes the NAD(P)H-dependent reduction of dihydroxyacetonephosphate (DHAP or glycerone phosphate) to glycerol 1-phosphate (G1P). The G1P thus generated is used as the glycerophosphate backbone of phospholipids in the cellular membranes of Archaea. The protein is Glycerol-1-phosphate dehydrogenase [NAD(P)+] of Korarchaeum cryptofilum (strain OPF8).